The chain runs to 1200 residues: Chromosome partition protein Smc (1200 aa).

Residue 32–39 (PNGCGKSN) coordinates ATP. Coiled-coil stretches lie at residues 171-219 (VTKY…AEKY) and 252-342 (LENL…MSEA). Residues 528-644 (QGIFGLVADV…QDVATARAWT (117 aa)) form the SMC hinge domain. Coiled-coil stretches lie at residues 679-706 (ALQK…ILTR) and 735-762 (LASQ…LEVE). Positions 763 to 795 (EGQLTQSHQALEHEEEASRGEVAHGQADREGRE) are disordered. Residues 772–795 (ALEHEEEASRGEVAHGQADREGRE) show a composition bias toward basic and acidic residues. Residues 1002–1039 (HAELSKRYDFLTAQKKDLQSSIEQLKEAIQRIDATSRE) are a coiled coil.

This sequence belongs to the SMC family. Homodimer. Probably forms the Structural Maintenance of Chromosome (SMC) condensin-like complex with ScpA and ScpB.

It localises to the cytoplasm. Functionally, a conditionally essential component of the chromosome segregation machinery. Required for chromosome condensation and partitioning. Important for positioning of ParB-parS complexes (ori of replication) and of the ter replication site, as well as for segration of the ParB-parS complex and thus chromosome segregation. May act via the formation of a condensin-like complex containing Smc, ScpA and ScpB that pulls DNA away from mid-cell into both cell halves. The polypeptide is Chromosome partition protein Smc (Myxococcus xanthus (strain DK1622)).